The chain runs to 761 residues: 5-methyltetrahydropteroyltriglutamate--homocysteine methyltransferase (761 aa).

5-methyltetrahydropteroyltri-L-glutamate-binding positions include R16–K19 and K118. L-homocysteine is bound by residues I436–S438 and E489. L-methionine-binding positions include I436–S438 and E489. 5-methyltetrahydropteroyltri-L-glutamate is bound by residues R520–C521 and W566. L-homocysteine is bound at residue D604. D604 provides a ligand contact to L-methionine. E610 is a 5-methyltetrahydropteroyltri-L-glutamate binding site. Positions 646, 648, and 670 each coordinate Zn(2+). H699 functions as the Proton donor in the catalytic mechanism. C731 provides a ligand contact to Zn(2+).

This sequence belongs to the vitamin-B12 independent methionine synthase family. Zn(2+) is required as a cofactor.

The enzyme catalyses 5-methyltetrahydropteroyltri-L-glutamate + L-homocysteine = tetrahydropteroyltri-L-glutamate + L-methionine. It functions in the pathway amino-acid biosynthesis; L-methionine biosynthesis via de novo pathway; L-methionine from L-homocysteine (MetE route): step 1/1. Its function is as follows. Catalyzes the transfer of a methyl group from 5-methyltetrahydrofolate to homocysteine resulting in methionine formation. The sequence is that of 5-methyltetrahydropteroyltriglutamate--homocysteine methyltransferase from Vibrio cholerae serotype O1 (strain ATCC 39315 / El Tor Inaba N16961).